Reading from the N-terminus, the 399-residue chain is Nicotinate phosphoribosyltransferase 1 (399 aa).

His-224 carries the phosphohistidine; by autocatalysis modification.

The protein belongs to the NAPRTase family. Transiently phosphorylated on a His residue during the reaction cycle. Phosphorylation strongly increases the affinity for substrates and increases the rate of nicotinate D-ribonucleotide production. Dephosphorylation regenerates the low-affinity form of the enzyme, leading to product release.

The enzyme catalyses nicotinate + 5-phospho-alpha-D-ribose 1-diphosphate + ATP + H2O = nicotinate beta-D-ribonucleotide + ADP + phosphate + diphosphate. Its pathway is cofactor biosynthesis; NAD(+) biosynthesis; nicotinate D-ribonucleotide from nicotinate: step 1/1. Catalyzes the synthesis of beta-nicotinate D-ribonucleotide from nicotinate and 5-phospho-D-ribose 1-phosphate at the expense of ATP. The polypeptide is Nicotinate phosphoribosyltransferase 1 (Pseudomonas aeruginosa (strain ATCC 15692 / DSM 22644 / CIP 104116 / JCM 14847 / LMG 12228 / 1C / PRS 101 / PAO1)).